The sequence spans 423 residues: LysM domain-containing GPI-anchored protein 3 (423 aa).

Residues Met1–Ala24 form the signal peptide. 4 cysteine pairs are disulfide-bonded: Cys31–Cys97, Cys37–Cys160, Cys95–Cys158, and Cys97–Cys160. One can recognise a LysM 1 domain in the interval Thr107 to Ile154. Asn162 carries an N-linked (GlcNAc...) asparagine glycan. Residues Leu173–Val216 form the LysM 2 domain. Disulfide bonds link Cys221–Cys253 and Cys248–Cys276. Asn238 carries N-linked (GlcNAc...) asparagine glycosylation. N-linked (GlcNAc...) asparagine glycosylation occurs at Asn285. Gly394 is lipidated: GPI-anchor amidated glycine. Residues Gly395–Phe423 constitute a propeptide, removed in mature form.

As to quaternary structure, interacts with peptidoglycans.

It localises to the cell membrane. Functionally, required as a cell surface receptor for peptidoglycan (PGN) elicitor signaling leading to innate immunity. Plays an essential role in detecting PGNs and restricting bacterial growth (of Pseudomonas syringae pv. tomato DC3000 for example). In Arabidopsis thaliana (Mouse-ear cress), this protein is LysM domain-containing GPI-anchored protein 3 (LYM3).